A 342-amino-acid polypeptide reads, in one-letter code: S-adenosylmethionine:tRNA ribosyltransferase-isomerase (342 aa).

Belongs to the QueA family. As to quaternary structure, monomer.

The protein resides in the cytoplasm. The enzyme catalyses 7-aminomethyl-7-carbaguanosine(34) in tRNA + S-adenosyl-L-methionine = epoxyqueuosine(34) in tRNA + adenine + L-methionine + 2 H(+). Its pathway is tRNA modification; tRNA-queuosine biosynthesis. Its function is as follows. Transfers and isomerizes the ribose moiety from AdoMet to the 7-aminomethyl group of 7-deazaguanine (preQ1-tRNA) to give epoxyqueuosine (oQ-tRNA). The sequence is that of S-adenosylmethionine:tRNA ribosyltransferase-isomerase from Bacillus subtilis (strain 168).